Consider the following 88-residue polypeptide: UPF0297 protein SGO_2042 (88 aa).

The protein belongs to the UPF0297 family.

The chain is UPF0297 protein SGO_2042 from Streptococcus gordonii (strain Challis / ATCC 35105 / BCRC 15272 / CH1 / DL1 / V288).